The chain runs to 251 residues: UPF0309 protein SAV_3856 (251 aa).

Residues 36–220 (IADTVADGGR…AGTLADRGIE (185 aa)) form the SIS domain.

Belongs to the UPF0309 family.

The protein is UPF0309 protein SAV_3856 of Streptomyces avermitilis (strain ATCC 31267 / DSM 46492 / JCM 5070 / NBRC 14893 / NCIMB 12804 / NRRL 8165 / MA-4680).